Consider the following 146-residue polypeptide: UPF0735 ACT domain-containing protein Cbei_1295 (146 aa).

The 76-residue stretch at 70–145 folds into the ACT domain; sequence TYNIIFKNEK…NVEKVEFIGM (76 aa).

Belongs to the UPF0735 family.

The polypeptide is UPF0735 ACT domain-containing protein Cbei_1295 (Clostridium beijerinckii (strain ATCC 51743 / NCIMB 8052) (Clostridium acetobutylicum)).